The primary structure comprises 106 residues: Putative toxin Rv3098A/RVBD_3098A (106 aa).

Belongs to the PemK/MazF family. In terms of assembly, forms a complex with cognate antitoxin Rv3098B/RVBD_3098B.

Its function is as follows. Putative toxic component of a possible type II toxin-antitoxin (TA) system. Its toxic effect may be neutralized by cognate antitoxin Rv3098B/RVBD_3098B. This is Putative toxin Rv3098A/RVBD_3098A from Mycobacterium tuberculosis (strain ATCC 25618 / H37Rv).